The chain runs to 394 residues: N-acetylgalactosamine-6-phosphate deacetylase (394 aa).

A Zn(2+)-binding site is contributed by glutamate 137. 148–149 (CH) contributes to the substrate binding site. Zn(2+) contacts are provided by histidine 201 and histidine 222. Substrate-binding positions include 225–226 (NG), arginine 233, and 254–257 (DGQH). Aspartate 280 serves as the catalytic Proton donor/acceptor. Position 313–315 (313–315 (LAG)) interacts with substrate.

This sequence belongs to the metallo-dependent hydrolases superfamily. NagA family.

It localises to the cytoplasm. The enzyme catalyses N-acetyl-D-galactosamine 6-phosphate + H2O = D-galactosamine 6-phosphate + acetate. It carries out the reaction N-acetyl-D-glucosamine 6-phosphate + H2O = D-glucosamine 6-phosphate + acetate. Functionally, involved in the pathway of N-acetyl-D-galactosamine degradation. Catalyzes the conversion of N-acetyl-D-galactosamine 6-phosphate to D-galactosamine 6-phosphate and acetate. It can also catalyze the conversion of N-acetyl-D-glucosamine 6-phosphate. The polypeptide is N-acetylgalactosamine-6-phosphate deacetylase (Shewanella sp. (strain ANA-3)).